Consider the following 945-residue polypeptide: MSNKKADSKPQAKYPVNLLDTPFPMRGDLPKREPQWVKEWEERGIYEKIRAASKGRPKFILHDGPPYANGDIHLGHAVNKILKDIVVKSRNMAGFDAPYVPGWDCHGMPIEIQIEKQFGKSLPAAEVMSKARAYATEQIEKQKVGFKRLGVLGDWANPYKTMNFVNEAEEIRALGKIIEKGYVYRGLKPVNWCFDCGSALAEAEVEYKDRTDPTIDVMFAFAEPEKTAHAFGLPALPRAEGGIVIWTTTPWTIPANQALNLHPEIIYALVDTERGLLIIAQERVEACMADFKLTGRVVATAPGVKLANLRFHHPLASAHPGYKRTAPVYLGDYVTTDTGTGVVHSSPAYGIEDFMSCKAHGMTDSDIINPVMGDGRYIESLPLFGGLSIWDANPKVVDALNAAGSLLRSEKYTHSYMHCWRHKTPIIYRATSQWFAGMDVTPQDGGKTLRETALEGIDATAFYPSWGKQRLFSMIANRPDWTLSRQRQWGVPMAFFVHKETGELHPRTLELLEEVAKRVEQSGIEAWQSLDPRELIGDDANLYEKNRDTLDVWFDSGTTHWHVLRGSHKDQLQFPADLYLEGSDQHRGWFHSSLLTASMIDGRAPYKGLLTHGFTVDGEGRKMSKSLGNGIDPHEVANRLGAEIIRLWIASTDYSGELAISEEILKRVTEGYRRIRNTLRFLLANLSDFDFAQHAVPVDEWLEIDRYAVAFSQQLQTELLGHYEKYEFHPVVAKLQTYCSEDLGGFYLDVLKDRLYTSAADSRARRSAQTALYHLTHGLLRVLAPFLSFTAEEAWKVFQPASDTIFTETYYAYPEVAGSAALIEKWALLRDVRGNVTKALEEARTANRIGSSLQAEVAVHASGARYDALTSLGDDLKFVLITSAATVVKVDDEAQESVDVAASKYQKCERCWHYREDVGAHADHPTLCGRCFSNLFENGEIRSAA.

A 'HIGH' region motif is present at residues 66–76 (PYANGDIHLGH). Glutamate 581 is a binding site for L-isoleucyl-5'-AMP. The 'KMSKS' region signature appears at 622–626 (KMSKS). Lysine 625 lines the ATP pocket. Residues cysteine 908, cysteine 911, cysteine 928, and cysteine 931 each coordinate Zn(2+).

Belongs to the class-I aminoacyl-tRNA synthetase family. IleS type 1 subfamily. As to quaternary structure, monomer. The cofactor is Zn(2+).

The protein localises to the cytoplasm. The enzyme catalyses tRNA(Ile) + L-isoleucine + ATP = L-isoleucyl-tRNA(Ile) + AMP + diphosphate. Catalyzes the attachment of isoleucine to tRNA(Ile). As IleRS can inadvertently accommodate and process structurally similar amino acids such as valine, to avoid such errors it has two additional distinct tRNA(Ile)-dependent editing activities. One activity is designated as 'pretransfer' editing and involves the hydrolysis of activated Val-AMP. The other activity is designated 'posttransfer' editing and involves deacylation of mischarged Val-tRNA(Ile). The protein is Isoleucine--tRNA ligase of Burkholderia orbicola (strain MC0-3).